Consider the following 406-residue polypeptide: MKYDEIMVRYGELSTKGHNKKSFIDRLGSNVRKALHQYDQVKIHPNQDRLHVELNGTDAEPVMERLKQVFGIQNFSPSLRVEKDFDSVVEAAVAIFKEQVQGPTTFKVETKRADHKFPMGTFEMNKQLGGALLKAFPTDLSVDVHHPDITLRVEIRLNGIYLTSAKILGAGGLPVGTAGKGMMMLSGGIDSPVAAYLALKRGVSLEMVHFYSPPYTSEQALAKAKELTGKLAKYSGSIKFIQVPFTEIQETVKEKVPEGYLMTVQRRLMLRLACALAQKRAGLAVFNGESLGQVASQTMESMLAIEDVTTMPVLRPVLSYDKNEIIKIAEDIDTYDLSILPYEDCCTVFTPPSPKTKPNLKRARSYEARLDVEGLMQRALDGIEITEIHAGDEFLNQNQDVFAELL.

In terms of domain architecture, THUMP spans 60–166 (EPVMERLKQV…LNGIYLTSAK (107 aa)). ATP contacts are provided by residues 184 to 185 (ML), 209 to 210 (HF), Arg-266, Gly-288, and Gln-297.

This sequence belongs to the ThiI family.

The protein resides in the cytoplasm. It carries out the reaction [ThiI sulfur-carrier protein]-S-sulfanyl-L-cysteine + a uridine in tRNA + 2 reduced [2Fe-2S]-[ferredoxin] + ATP + H(+) = [ThiI sulfur-carrier protein]-L-cysteine + a 4-thiouridine in tRNA + 2 oxidized [2Fe-2S]-[ferredoxin] + AMP + diphosphate. The enzyme catalyses [ThiS sulfur-carrier protein]-C-terminal Gly-Gly-AMP + S-sulfanyl-L-cysteinyl-[cysteine desulfurase] + AH2 = [ThiS sulfur-carrier protein]-C-terminal-Gly-aminoethanethioate + L-cysteinyl-[cysteine desulfurase] + A + AMP + 2 H(+). The protein operates within cofactor biosynthesis; thiamine diphosphate biosynthesis. Catalyzes the ATP-dependent transfer of a sulfur to tRNA to produce 4-thiouridine in position 8 of tRNAs, which functions as a near-UV photosensor. Also catalyzes the transfer of sulfur to the sulfur carrier protein ThiS, forming ThiS-thiocarboxylate. This is a step in the synthesis of thiazole, in the thiamine biosynthesis pathway. The sulfur is donated as persulfide by IscS. The protein is Probable tRNA sulfurtransferase of Limosilactobacillus fermentum (strain NBRC 3956 / LMG 18251) (Lactobacillus fermentum).